The primary structure comprises 333 residues: HTH-type transcriptional repressor PurR (333 aa).

The HTH lacI-type domain occupies 2-56 (ATIKDVAKMAGVSTTTVSHVINKTRFVAKETEQQVLQAIKNLNYSPSAVARSLKV). Positions 4-23 (IKDVAKMAGVSTTTVSHVIN) form a DNA-binding region, H-T-H motif. Residues 48-56 (SAVARSLKV) mediate DNA binding. Hypoxanthine contacts are provided by Tyr-73, Lys-189, Thr-191, Phe-220, and Asp-274.

Homodimer.

The protein operates within purine metabolism; purine nucleotide biosynthesis [regulation]. In terms of biological role, is the main repressor of the genes involved in the de novo synthesis of purine nucleotides, regulating purB, purC, purEK, purF, purHD, purL, purMN and guaBA expression. PurR is allosterically activated to bind its cognate DNA by binding the purine corepressors, hypoxanthine or guanine, thereby effecting transcription repression. The protein is HTH-type transcriptional repressor PurR of Histophilus somni (strain 129Pt) (Haemophilus somnus).